Reading from the N-terminus, the 184-residue chain is Chromobox protein homolog hpl-1 (184 aa).

The span at 1 to 13 (MSRQNPVRSTRGN) shows a compositional bias: polar residues. 2 disordered regions span residues 1 to 27 (MSRQ…QDAP) and 87 to 115 (AAKR…STSD). One can recognise a Chromo domain in the interval 37 to 95 (FVVEKVLNKRLTRGGSEYYIKWQGFPESECSWEPIENLQCDRMIQEYEKEAAKRTTRKR). Positions 99–115 (PQPSTSSSAELQPSTSD) are enriched in polar residues.

In terms of assembly, interacts with histone demethylase spr-5. Interacts with chromobox protein homolog hpl-2. Interacts with histone H3 tails methylated at 'Lys-9' (H3K9me3) and 'Lys-23'(H3K23me2). Interacts with histone H1 variant his-24 (when monomethylated at 'Lys-14'); the interaction is direct. May interact with the REST corepressor rcor-1, histone deacetylase hda-1, and the histone demethylase lsd-1.

The protein localises to the nucleus. Seems to be involved in transcriptional silencing in heterochromatin-like complexes. Involved in epigenetic repression. Probably does not act as global transcriptional repressor. Plays a role in linking epigenetic regulation with the innate immune response. Acting in concert with chromobox protein homolog hpl-2 and histone H1 protein his-24, involved in reproduction, somatic gonad development, male tail development and vulval cell fate decisions; perhaps as a result of modulating expression of Hox genes mab-5 and egl-5. Role in growth and somatic gonad development is antagonized by histone-lysine N-methyltransferase set-2/SET1. Required for larval development, acting redundantly with hpl-2. Plays a role in the formation of the vulva and in fertility, acting together with a CoREST-like complex, and hpl-2. This chain is Chromobox protein homolog hpl-1, found in Caenorhabditis elegans.